The primary structure comprises 441 residues: Transforming protein p54/c-ets-1 (441 aa).

Residues 51 to 136 enclose the PNT domain; the sequence is ATFSGFAKEQ…EHLEILQKEE (86 aa). The activation domain; required for transcription activation stretch occupies residues 130-243; sequence EILQKEEAKP…DNMCMGRASR (114 aa). Residues 304–312 form a helix HI-1 region; sequence FKDYVRDRA. Residues 323-330 form a helix HI-2 region; the sequence is AAALAGYT. The segment at residues 335-415 is a DNA-binding region (ETS); the sequence is IQLWQFLLEL…AGKRYVYRFV (81 aa). The helix H4 stretch occupies residues 418 to 422; sequence LQSLL. Residues 426–432 are helix H5; it reads PEELHAM.

Belongs to the ETS family. Binds DNA as a homodimer; homodimerization is required for transcription activation.

The protein localises to the nucleus. It is found in the cytoplasm. Autoinhibited by a module composed of four alpha helices (HI-1, HI-2, H4, and H5) that flank the DNA-binding ETS domain, reducing the affinity for DNA. In terms of biological role, transcription factor. Directly controls the expression of cytokine and chemokine genes in a wide variety of different cellular contexts. This is Transforming protein p54/c-ets-1 (ETS1) from Gallus gallus (Chicken).